Consider the following 221-residue polypeptide: N-acetyltransferase 8F1 (221 aa).

The chain crosses the membrane as a helical span at residues 53–73 (LVLVSGSWLLAVVCIFFLLLL). An N-acetyltransferase domain is found at 69–219 (FLLLLLRFLA…RTIQLKYPFP (151 aa)).

This sequence belongs to the camello family.

It is found in the membrane. In terms of biological role, may play a role in regulation of gastrulation. The polypeptide is N-acetyltransferase 8F1 (Rattus norvegicus (Rat)).